The following is a 436-amino-acid chain: 3-ketoacyl-CoA thiolase (436 aa).

The active-site Acyl-thioester intermediate is the cysteine 99. Residues histidine 392 and cysteine 422 each act as proton acceptor in the active site.

It belongs to the thiolase-like superfamily. Thiolase family. In terms of assembly, heterotetramer of two alpha chains (FadJ) and two beta chains (FadI).

Its subcellular location is the cytoplasm. It catalyses the reaction an acyl-CoA + acetyl-CoA = a 3-oxoacyl-CoA + CoA. It functions in the pathway lipid metabolism; fatty acid beta-oxidation. Its function is as follows. Catalyzes the final step of fatty acid oxidation in which acetyl-CoA is released and the CoA ester of a fatty acid two carbons shorter is formed. The sequence is that of 3-ketoacyl-CoA thiolase from Salmonella paratyphi B (strain ATCC BAA-1250 / SPB7).